The sequence spans 98 residues: Large ribosomal subunit protein uL23 (98 aa).

This sequence belongs to the universal ribosomal protein uL23 family. As to quaternary structure, part of the 50S ribosomal subunit. Contacts protein L29, and trigger factor when it is bound to the ribosome.

Functionally, one of the early assembly proteins it binds 23S rRNA. One of the proteins that surrounds the polypeptide exit tunnel on the outside of the ribosome. Forms the main docking site for trigger factor binding to the ribosome. In Sorangium cellulosum (strain So ce56) (Polyangium cellulosum (strain So ce56)), this protein is Large ribosomal subunit protein uL23.